Here is a 320-residue protein sequence, read N- to C-terminus: NAC domain-containing protein 18 (320 aa).

Residues 1–22 (MESTDSSGGPPPPQPNLPPGFR) are disordered. Residues 9 to 18 (GPPPPQPNLP) show a composition bias toward pro residues. The NAC domain occupies 17-177 (LPPGFRFHPT…DWVLCRIYKK (161 aa)). Residues 118-183 (VGVKKALVFY…IYKKNNSTAS (66 aa)) mediate DNA binding.

In terms of tissue distribution, restricted primarily to the region of the embryo including the SAM. Expressed in the outer integument, but seems not expressed in the embryo at the torpedo stage.

It is found in the nucleus. May encode a transcription factor involved in the elaboration of shoot apical meristems (SAM). Together with NAC056/NARS1, regulates embryogenesis by regulating the development and degeneration of ovule integuments, a process required for intertissue communication between the embryo and the maternal integument. The protein is NAC domain-containing protein 18 (NAC018) of Arabidopsis thaliana (Mouse-ear cress).